We begin with the raw amino-acid sequence, 282 residues long: Homeobox protein CDX-4 (282 aa).

Disordered regions lie at residues 13 to 36 (MYPG…GGSG) and 98 to 156 (MNDM…SPYA). Positions 20–29 (SPGGSSTAGV) are enriched in low complexity. Polar residues-rich tracts occupy residues 110 to 124 (DYST…SNGG) and 133 to 148 (SLVS…TSPS). Positions 171 to 230 (KEKYRVVYTDHQRLELEKEFHCNRYITIRRKSELAVNLGLSERQVKIWFQNRRAKERKMI) form a DNA-binding region, homeobox.

It belongs to the Caudal homeobox family.

Its subcellular location is the nucleus. This chain is Homeobox protein CDX-4 (Cdx4), found in Mus musculus (Mouse).